Here is a 334-residue protein sequence, read N- to C-terminus: Leucine-rich repeat-containing protein 39 (334 aa).

Residues 10 to 47 adopt a coiled-coil conformation; sequence AVNAVKEVWEKRIKKLNEDLKREKEFQQKLVRIWEERV. LRR repeat units follow at residues 84–105, 107–128, 130–151, 153–176, 177–198, 200–221, 223–244, 246–267, and 269–290; these read QLQEWQLHRIGLLKIPEFIGRF, NLIVLDLSRNTITEIPRGIGLL, RLQELILSYNRIKTVPMELSYC, SLEKLELAVNRDISDLPQELSNLL, KLTHLDLSMNLFTTIPPAVLNM, ALEWLDMGSNRLEQLPDTIERM, NLHTLWLQRNEITCLPETISSM, NLSTLVLSNNKLQDIPVCMEKM, and NLRFVNFRDNPLKLEVTLPPSE.

Interacts with MYH7 (via C-terminus).

The protein localises to the cytoplasm. The protein resides in the myofibril. It localises to the sarcomere. Its subcellular location is the m line. In terms of biological role, component of the sarcomeric M-band which plays a role in myocyte response to biomechanical stress. May regulate expression of other M-band proteins via an SRF-dependent pathway. Important for normal contractile function in heart. The chain is Leucine-rich repeat-containing protein 39 from Bos taurus (Bovine).